The following is a 110-amino-acid chain: Eukaryotic translation initiation factor eIF1 (110 aa).

Residue T40 is modified to Phosphothreonine.

The protein belongs to the SUI1 family.

Its function is as follows. Probably involved in translation. This Drosophila melanogaster (Fruit fly) protein is Eukaryotic translation initiation factor eIF1.